Reading from the N-terminus, the 179-residue chain is Large ribosomal subunit protein uL6 (179 aa).

It belongs to the universal ribosomal protein uL6 family. As to quaternary structure, part of the 50S ribosomal subunit.

In terms of biological role, this protein binds to the 23S rRNA, and is important in its secondary structure. It is located near the subunit interface in the base of the L7/L12 stalk, and near the tRNA binding site of the peptidyltransferase center. This chain is Large ribosomal subunit protein uL6, found in Acidobacterium capsulatum (strain ATCC 51196 / DSM 11244 / BCRC 80197 / JCM 7670 / NBRC 15755 / NCIMB 13165 / 161).